Reading from the N-terminus, the 159-residue chain is Probable chemoreceptor glutamine deamidase CheD 2 (159 aa).

It belongs to the CheD family.

The enzyme catalyses L-glutaminyl-[protein] + H2O = L-glutamyl-[protein] + NH4(+). Its function is as follows. Probably deamidates glutamine residues to glutamate on methyl-accepting chemotaxis receptors (MCPs), playing an important role in chemotaxis. The polypeptide is Probable chemoreceptor glutamine deamidase CheD 2 (Anaeromyxobacter dehalogenans (strain 2CP-C)).